The following is a 642-amino-acid chain: Zinc finger protein 398 (642 aa).

Disordered regions lie at residues 1 to 24 (MAEA…QPLP) and 198 to 225 (EGEH…PGIS). One can recognise a KRAB domain in the interval 143–214 (VAFDDVSIYF…DQAGPEESEI (72 aa)). Positions 207–220 (AGPEESEIPTDPSE) are enriched in acidic residues. K265 participates in a covalent cross-link: Glycyl lysine isopeptide (Lys-Gly) (interchain with G-Cter in SUMO2). A C2H2-type 1; atypical zinc finger spans residues 343–364 (FSCHHCGKNLSQDMLLTHQCSH). Residues 370 to 392 (LPCAQCPKHFTPQADLSSTSQDH) form a C2H2-type 2; degenerate zinc finger. C2H2-type zinc fingers lie at residues 398–420 (PTCP…LRVH), 427–449 (FPCP…RRAH), 455–477 (FRCA…QRGH), 483–505 (FSCP…QMIH), 511–533 (YPCT…RRLH), 539–561 (FSCP…QRIH), and 567–590 (YPCS…RSGH). Residues 587–615 (RSGHNGGCGGDSDPSGQPPNPPGPLITGL) form a disordered region.

Belongs to the krueppel C2H2-type zinc-finger protein family.

It is found in the nucleus. Its function is as follows. Functions as a transcriptional activator. This Homo sapiens (Human) protein is Zinc finger protein 398 (ZNF398).